The primary structure comprises 470 residues: Nuclear receptor subfamily 0 group B member 1 (470 aa).

3 repeat units span residues 1–67, 68–133, and 134–200. Residues 1–253 are 4 X 67 AA tandem repeats; that stretch reads MAGEDHQWQG…RPVALKNPQV (253 aa). 3 consecutive short sequence motifs (LXXLL motif) follow at residues 13–17, 80–84, and 146–150; these read LYNML, LYSML, and LYSLL. The stretch at 201-253 is one 4; truncated repeat; sequence FCGEDQPQQGSTLYSMPTSTNQTPAAPEERPGAPWWDTSCGALRPVALKNPQV. The 265-residue stretch at 205 to 469 folds into the NR LBD domain; sequence DQPQQGSTLY…DMMLEMLCTK (265 aa). An AF-2 motif motif is present at residues 461 to 466; it reads MMLEML.

This sequence belongs to the nuclear hormone receptor family. NR0 subfamily. Homodimer. Interacts with NR5A1, NR5A2, NR0B2 and with COPS2. Interacts with ESRRB; represses ESRRB activity at the GATA6 promoter.

It localises to the nucleus. It is found in the cytoplasm. Functionally, nuclear receptor that lacks a DNA-binding domain and acts as a corepressor that inhibits the transcriptional activity of other nuclear receptors through heterodimeric interactions. Component of a cascade required for the development of the hypothalamic-pituitary-adrenal-gonadal axis. May also have a role in the development of the embryo and in the maintenance of embryonic stem cell pluripotency. The chain is Nuclear receptor subfamily 0 group B member 1 (NR0B1) from Callithrix jacchus (White-tufted-ear marmoset).